A 94-amino-acid chain; its full sequence is Integration host factor subunit beta (94 aa).

The protein belongs to the bacterial histone-like protein family. As to quaternary structure, heterodimer of an alpha and a beta chain.

Its function is as follows. This protein is one of the two subunits of integration host factor, a specific DNA-binding protein that functions in genetic recombination as well as in transcriptional and translational control. This Escherichia coli O127:H6 (strain E2348/69 / EPEC) protein is Integration host factor subunit beta.